The chain runs to 206 residues: Fibroblast growth factor 4 (206 aa).

Residues 1–29 (MAGPGTAAAALLPAVLLAVLAPWAGRGGA) form the signal peptide.

It belongs to the heparin-binding growth factors family. In terms of assembly, interacts with FGFR1, FGFR2, FGFR3 and FGFR4. Affinity between fibroblast growth factors (FGFs) and their receptors is increased by heparan sulfate glycosaminoglycans that function as coreceptors.

Its subcellular location is the secreted. In terms of biological role, plays an important role in the regulation of embryonic development, cell proliferation, and cell differentiation. Required for normal limb and cardiac valve development during embryogenesis. May play a role in embryonic molar tooth bud development via inducing the expression of MSX1, MSX2 and MSX1-mediated expression of SDC1 in dental mesenchyme cells. The sequence is that of Fibroblast growth factor 4 from Bos taurus (Bovine).